We begin with the raw amino-acid sequence, 427 residues long: Mitogen-activated protein kinase 8B (427 aa).

A Protein kinase domain is found at 26–321; that stretch reads YQNLRPIGSG…VDEALQHPYI (296 aa). ATP-binding positions include 33 to 40 and lysine 55; that span reads GSGAQGIV. Aspartate 151 acts as the Proton acceptor in catalysis. Threonine 183 is modified (phosphothreonine). Positions 183 to 185 match the TXY motif; that stretch reads TPY. Tyrosine 185 is subject to Phosphotyrosine. Positions 372–427 are disordered; sequence IRGQPSPIGAAVINGSPQPSSSSSINDVSSMSTEPTVASDTDSSLEASAGPLSCCR. The segment covering 387 to 403 has biased composition (low complexity); the sequence is SPQPSSSSSINDVSSMS. Residues 404–417 show a composition bias toward polar residues; sequence TEPTVASDTDSSLE.

Belongs to the protein kinase superfamily. CMGC Ser/Thr protein kinase family. MAP kinase subfamily. Mg(2+) is required as a cofactor. Dually phosphorylated on Thr-183 and Tyr-185, which activates the enzyme. In terms of tissue distribution, expressed at high levels in the ovary and at lower levels in brain, gill, heart, spleen, liver, kidney, muscle, bladder and gut.

The enzyme catalyses L-seryl-[protein] + ATP = O-phospho-L-seryl-[protein] + ADP + H(+). The catalysed reaction is L-threonyl-[protein] + ATP = O-phospho-L-threonyl-[protein] + ADP + H(+). Activated by threonine and tyrosine phosphorylation. Responds to activation by environmental stress and pro-inflammatory cytokines by phosphorylating a number of transcription factors, primarily components of AP-1 such as c-Jun and ATF2 and thus regulates AP-1 transcriptional activity. May play a role in the regulation of the circadian clock. This chain is Mitogen-activated protein kinase 8B (mapk8b), found in Cyprinus carpio (Common carp).